The primary structure comprises 485 residues: ATP-dependent 6-phosphofructokinase 7 (485 aa).

Residues Gly-101, Arg-164–Gly-165, and Gly-189–Thr-192 each bind ATP. Mg(2+) is bound at residue Asp-190. Substrate contacts are provided by residues Thr-218 to Asp-220, Met-263 to Arg-265, Glu-319, and Tyr-374 to Arg-377. Asp-220 acts as the Proton acceptor in catalysis. The tract at residues Ser-449 to Lys-485 is disordered. Over residues Asp-455–Pro-464 the composition is skewed to basic and acidic residues.

It belongs to the phosphofructokinase type A (PFKA) family. PPi-dependent PFK group II subfamily. Atypical ATP-dependent clade 'X' sub-subfamily. Homotetramer. Mg(2+) is required as a cofactor. In terms of tissue distribution, expressed in roots, leaves, stems and flowers.

The protein resides in the cytoplasm. The enzyme catalyses beta-D-fructose 6-phosphate + ATP = beta-D-fructose 1,6-bisphosphate + ADP + H(+). It participates in carbohydrate degradation; glycolysis; D-glyceraldehyde 3-phosphate and glycerone phosphate from D-glucose: step 3/4. With respect to regulation, allosterically activated by AMP. Its function is as follows. Catalyzes the phosphorylation of D-fructose 6-phosphate to fructose 1,6-bisphosphate by ATP, the first committing step of glycolysis. In Arabidopsis thaliana (Mouse-ear cress), this protein is ATP-dependent 6-phosphofructokinase 7.